Here is a 411-residue protein sequence, read N- to C-terminus: Tyrosine--tRNA ligase (411 aa).

Position 33 (Tyr33) interacts with L-tyrosine. The short motif at 38–47 is the 'HIGH' region element; sequence PTADSLHLGN. Residues Tyr160 and Gln164 each coordinate L-tyrosine. The 'KMSKS' region motif lies at 222–226; it reads KFGKS. Lys225 is a binding site for ATP. In terms of domain architecture, S4 RNA-binding spans 346–410; the sequence is VNLVNFLVEN…GKKKILICKV (65 aa).

Belongs to the class-I aminoacyl-tRNA synthetase family. TyrS type 1 subfamily. As to quaternary structure, homodimer.

It is found in the cytoplasm. The enzyme catalyses tRNA(Tyr) + L-tyrosine + ATP = L-tyrosyl-tRNA(Tyr) + AMP + diphosphate + H(+). In terms of biological role, catalyzes the attachment of tyrosine to tRNA(Tyr) in a two-step reaction: tyrosine is first activated by ATP to form Tyr-AMP and then transferred to the acceptor end of tRNA(Tyr). In Mycoplasmopsis synoviae (strain 53) (Mycoplasma synoviae), this protein is Tyrosine--tRNA ligase.